The chain runs to 328 residues: MIQQMQMPEKLEVDEASYSNYYGKFIAQPLERGYGVTIGNAIRRVLLSSLPGTAITGIKIEGVLHEFSTIDGVKEDVPDIVLNLKQIRFRSISKRNAVVTLVLRGPKDFVAGDIVSPEGDFEVLNPEHHIATLNEDATLKIDVSVGRGRGYMPAEDNKPETMPIGYISVDSIFTPIRNVKYSVENTRVGQRTDYEKLSLEVETDGSIAPDEAVSMAGKIINDHVRLFSLFSPTQEEEVEEEVQQEDEEFENMRKLLMTRIEDLELSVRSHNCLRSAEIDTLGQLVSKREDELLGYKNFGKKSLAELKELLESKNLSFGMEVTKYRLNQ.

The alpha N-terminal domain (alpha-NTD) stretch occupies residues 1 to 231; the sequence is MIQQMQMPEK…DHVRLFSLFS (231 aa). An alpha C-terminal domain (alpha-CTD) region spans residues 252–328; the sequence is MRKLLMTRIE…MEVTKYRLNQ (77 aa).

Belongs to the RNA polymerase alpha chain family. In terms of assembly, homodimer. The RNAP catalytic core consists of 2 alpha, 1 beta, 1 beta' and 1 omega subunit. When a sigma factor is associated with the core the holoenzyme is formed, which can initiate transcription.

The catalysed reaction is RNA(n) + a ribonucleoside 5'-triphosphate = RNA(n+1) + diphosphate. In terms of biological role, DNA-dependent RNA polymerase catalyzes the transcription of DNA into RNA using the four ribonucleoside triphosphates as substrates. The protein is DNA-directed RNA polymerase subunit alpha of Chloroherpeton thalassium (strain ATCC 35110 / GB-78).